A 442-amino-acid chain; its full sequence is Probable carboxypeptidase PADG_04062 (442 aa).

An N-terminal signal peptide occupies residues 1–20 (MKLQYLVALLSVQAVPPVTA). Residue N102 is glycosylated (N-linked (GlcNAc...) asparagine). D160 is a Zn(2+) binding site. Catalysis depends on E192, which acts as the Proton acceptor. E193 lines the Zn(2+) pocket. N-linked (GlcNAc...) asparagine glycosylation is present at N343.

It belongs to the peptidase M20A family. Requires Zn(2+) as cofactor.

The protein localises to the secreted. The polypeptide is Probable carboxypeptidase PADG_04062 (Paracoccidioides brasiliensis (strain Pb18)).